The chain runs to 207 residues: Frataxin, mitochondrial (207 aa).

The transit peptide at 1 to 40 directs the protein to the mitochondrion; that stretch reads MWAFGGRAAVGLLPRTASRASAWVGNPRWREPIVTCGRRG.

Belongs to the frataxin family. In terms of assembly, component of the mitochondrial core iron-sulfur cluster (ISC) complex composed of NFS1, LYRM4, NDUFAB1, ISCU, FXN, and FDX2; this complex is a heterohexamer containing two copies of each monomer. Homodimer. Monomer (probable predominant form). Oligomer. Monomers and polymeric aggregates of &gt;1 MDa have been isolated from mitochondria. A small fraction of heterologous overexpressed recombinant frataxin forms high-molecular weight aggregates that incorporate iron. Interacts with LYRM4. Interacts (via ferrous form) with ISCU; the interaction is possible when both are bound to the dimeric form of the cysteine desulfurase complex (NFS1:LYRM4) and the interaction enhances FXN interaction to the dimeric form of the cysteine desulfurase complex (NFS1:LYRM4). Interacts with FECH; one iron-bound FXN monomer seems to interact with a FECH homodimer. Interacts with SDHA and SDHB. Interacts with ACO2; the interaction is dependent on citrate. Interacts with HSPA9. Component of a complex composed of FXN, NFS1, LYRM4 and ISCU. As to quaternary structure, interacts with ACO1. Interacts with ISCU (cytoplasmic form). Processed in two steps by mitochondrial processing peptidase (MPP). MPP first cleaves the precursor to intermediate form and subsequently converts the intermediate to yield frataxin mature form (frataxin(81-210)) which is the predominant form. The additional forms, frataxin(56-210) and frataxin(78-210), seem to be produced when the normal maturation process is impaired; their physiological relevance is unsure. As to expression, heart, liver, skeletal muscle, kidney, spleen and thymus. Weakly expressed in the brain and lung.

It localises to the mitochondrion. Its subcellular location is the cytoplasm. The protein localises to the cytosol. The enzyme catalyses 4 Fe(2+) + O2 + 4 H(+) = 4 Fe(3+) + 2 H2O. Its function is as follows. Functions as an activator of persulfide transfer to the scaffoding protein ISCU as component of the core iron-sulfur cluster (ISC) assembly complex and participates to the [2Fe-2S] cluster assembly. Accelerates sulfur transfer from NFS1 persulfide intermediate to ISCU and to small thiols such as L-cysteine and glutathione leading to persulfuration of these thiols and ultimately sulfide release. Binds ferrous ion and is released from FXN upon the addition of both L-cysteine and reduced FDX2 during [2Fe-2S] cluster assembly. The core iron-sulfur cluster (ISC) assembly complex is involved in the de novo synthesis of a [2Fe-2S] cluster, the first step of the mitochondrial iron-sulfur protein biogenesis. This process is initiated by the cysteine desulfurase complex (NFS1:LYRM4:NDUFAB1) that produces persulfide which is delivered on the scaffold protein ISCU in a FXN-dependent manner. Then this complex is stabilized by FDX2 which provides reducing equivalents to accomplish the [2Fe-2S] cluster assembly. Finally, the [2Fe-2S] cluster is transferred from ISCU to chaperone proteins, including HSCB, HSPA9 and GLRX5. May play a role in the protection against iron-catalyzed oxidative stress through its ability to catalyze the oxidation of Fe(2+) to Fe(3+); the oligomeric form but not the monomeric form has in vitro ferroxidase activity. May be able to store large amounts of iron in the form of a ferrihydrite mineral by oligomerization; however, the physiological relevance is unsure as reports are conflicting and the function has only been shown using heterologous overexpression systems. May function as an iron chaperone protein that protects the aconitase [4Fe-4S]2+ cluster from disassembly and promotes enzyme reactivation. May play a role as a high affinity iron binding partner for FECH that is capable of both delivering iron to ferrochelatase and mediating the terminal step in mitochondrial heme biosynthesis. In terms of biological role, modulates the RNA-binding activity of ACO1. May be involved in the cytoplasmic iron-sulfur protein biogenesis. May contribute to oxidative stress resistance and overall cell survival. This Mus musculus (Mouse) protein is Frataxin, mitochondrial.